Reading from the N-terminus, the 139-residue chain is Large ribosomal subunit protein uL16 (139 aa).

This sequence belongs to the universal ribosomal protein uL16 family. As to quaternary structure, part of the 50S ribosomal subunit.

Binds 23S rRNA and is also seen to make contacts with the A and possibly P site tRNAs. The sequence is that of Large ribosomal subunit protein uL16 from Parvibaculum lavamentivorans (strain DS-1 / DSM 13023 / NCIMB 13966).